A 362-amino-acid chain; its full sequence is Leucoanthocyanidin dioxygenase (362 aa).

The tract at residues 1–23 (MVTSAMGPSPRVEELARSGLDTI) is disordered. In terms of domain architecture, Fe2OG dioxygenase spans 214 to 313 (LIVQMKINFY…RISWAVFCEP (100 aa)). The Fe cation site is built by His-238, Asp-240, and His-294. Arg-304 is a catalytic residue.

It belongs to the iron/ascorbate-dependent oxidoreductase family. Fe cation serves as cofactor. It depends on L-ascorbate as a cofactor. Expressed in red but not in green forma of P.frutescens. In red forma, it is predominantly expressed in stems and leaves, but not in roots.

The enzyme catalyses a (2R,3S,4S)-leucoanthocyanidin + 2-oxoglutarate + O2 = a 4-H-anthocyanidin with a 3-hydroxy group + succinate + CO2 + 2 H2O. Its pathway is pigment biosynthesis; anthocyanin biosynthesis. Functionally, oxidation of leucoanthocyanidins into anthocyanidins. The polypeptide is Leucoanthocyanidin dioxygenase (ANS) (Perilla frutescens (Beefsteak mint)).